A 382-amino-acid polypeptide reads, in one-letter code: MTEQRPLTIALVAGETSGDILGAGLIRALKERVPNARFVGVAGPRMQAEGCEAWYEMEELAVMGIVEVLGRLRRLLHIRADLTKRFGELKPDVFVGIDAPDFNITLEGNLKKQGIKTIHYVSPSVWAWRQKRVFKIGRATDLVLAFLPFEKAFYDKYNVPCRFIGHTMADAMPLDPDKNAARDVLGIPHDAHCLALLPGSRGAEVEMLSADFLKTAQLLRQTYPDLEIVVPLVNAKRREQFERIKAEVAPDFSVHLLDGMGREAMVASDAALLASGTAALECMLAKCPMVVGYRMKPFTFWLAKRLVKTDYVSLPNLLAGRELVKELLQEECEPQKLAAALLPLLANGKISHAMHDTFRELHQQIRCNADEQAAQAVLELAQ.

This sequence belongs to the LpxB family.

The catalysed reaction is 2-N,3-O-bis[(3R)-3-hydroxytetradecanoyl]-alpha-D-glucosaminyl 1-phosphate + UDP-2-N,3-O-bis[(3R)-3-hydroxytetradecanoyl]-alpha-D-glucosamine = lipid A disaccharide (E. coli) + UDP + H(+). It catalyses the reaction a lipid X + a UDP-2-N,3-O-bis[(3R)-3-hydroxyacyl]-alpha-D-glucosamine = a lipid A disaccharide + UDP + H(+). It participates in glycolipid biosynthesis; lipid IV(A) biosynthesis; lipid IV(A) from (3R)-3-hydroxytetradecanoyl-[acyl-carrier-protein] and UDP-N-acetyl-alpha-D-glucosamine: step 5/6. Its function is as follows. Condensation of UDP-2,3-diacylglucosamine and 2,3-diacylglucosamine-1-phosphate to form lipid A disaccharide, a precursor of lipid A, a phosphorylated glycolipid that anchors the lipopolysaccharide to the outer membrane of the cell. In Shigella boydii serotype 18 (strain CDC 3083-94 / BS512), this protein is Lipid-A-disaccharide synthase.